Consider the following 327-residue polypeptide: Diacylglycerol acyltransferase/mycolyltransferase Ag85B (327 aa).

Residues 1 to 38 (MIDVSGKIRAWGRWLLVGAAATLPSLISLAGGAATASA) form the signal peptide. Residue 80–81 (LR) coordinates substrate. The fibronectin-binding stretch occupies residues 96 to 106 (FEWYYQSGLSV). An intrachain disulfide couples C125 to C130. Substrate contacts are provided by S164 and D192. S164 acts as the Nucleophile in catalysis. E268 is an active-site residue. Substrate-binding positions include 270 to 273 (FVHG), K277, and 300 to 302 (HSW). H300 is a catalytic residue.

The protein belongs to the mycobacterial A85 antigen family.

It localises to the secreted. The enzyme catalyses 2 alpha,alpha'-trehalose 6-mycolate = alpha,alpha'-trehalose 6,6'-bismycolate + alpha,alpha-trehalose. It catalyses the reaction an acyl-CoA + a 1,2-diacyl-sn-glycerol = a triacyl-sn-glycerol + CoA. Its function is as follows. The antigen 85 proteins (FbpA, FbpB, FbpC) are responsible for the high affinity of mycobacteria for fibronectin, a large adhesive glycoprotein, which facilitates the attachment of M.tuberculosis to murine alveolar macrophages (AMs). They also help to maintain the integrity of the cell wall by catalyzing the transfer of mycolic acids to cell wall arabinogalactan and through the synthesis of alpha,alpha-trehalose dimycolate (TDM, cord factor). They catalyze the transfer of a mycoloyl residue from one molecule of alpha,alpha-trehalose monomycolate (TMM) to another TMM, leading to the formation of TDM. In Mycobacterium leprae (strain TN), this protein is Diacylglycerol acyltransferase/mycolyltransferase Ag85B (fbpB).